A 158-amino-acid chain; its full sequence is 6,7-dimethyl-8-ribityllumazine synthase (158 aa).

5-amino-6-(D-ribitylamino)uracil-binding positions include F24, 58-60, and 82-84; these read AFE and AVI. 87–88 is a (2S)-2-hydroxy-3-oxobutyl phosphate binding site; it reads GT. The active-site Proton donor is H90. Position 115 (F115) interacts with 5-amino-6-(D-ribitylamino)uracil. R129 is a (2S)-2-hydroxy-3-oxobutyl phosphate binding site.

The protein belongs to the DMRL synthase family. In terms of assembly, forms an icosahedral capsid composed of 60 subunits, arranged as a dodecamer of pentamers.

The catalysed reaction is (2S)-2-hydroxy-3-oxobutyl phosphate + 5-amino-6-(D-ribitylamino)uracil = 6,7-dimethyl-8-(1-D-ribityl)lumazine + phosphate + 2 H2O + H(+). Its pathway is cofactor biosynthesis; riboflavin biosynthesis; riboflavin from 2-hydroxy-3-oxobutyl phosphate and 5-amino-6-(D-ribitylamino)uracil: step 1/2. In terms of biological role, catalyzes the formation of 6,7-dimethyl-8-ribityllumazine by condensation of 5-amino-6-(D-ribitylamino)uracil with 3,4-dihydroxy-2-butanone 4-phosphate. This is the penultimate step in the biosynthesis of riboflavin. This chain is 6,7-dimethyl-8-ribityllumazine synthase, found in Ectopseudomonas mendocina (strain ymp) (Pseudomonas mendocina).